Reading from the N-terminus, the 315-residue chain is NADH-ubiquinone oxidoreductase chain 1 (315 aa).

8 helical membrane passes run 6–26 (FILSLIGSLLLIICVLVSVAF), 80–100 (ISPIFSLFLSLFVWMCMPFFV), 107–127 (LGGLFFLCCTSLGVYTVMIAG), 153–173 (LALILLSFVFLIGSYNMMYFF), 177–197 (IYIWFLIILFPMALVWLTISL), 229–249 (LIFMAEYASILFMSMLFCVIF), 253–273 (DVFNLLFYVKLTFISFVFIWA), and 292–312 (CFLSFSLNYLLFFIGFKILLF).

This sequence belongs to the complex I subunit 1 family.

It localises to the mitochondrion inner membrane. It carries out the reaction a ubiquinone + NADH + 5 H(+)(in) = a ubiquinol + NAD(+) + 4 H(+)(out). Core subunit of the mitochondrial membrane respiratory chain NADH dehydrogenase (Complex I) that is believed to belong to the minimal assembly required for catalysis. Complex I functions in the transfer of electrons from NADH to the respiratory chain. The immediate electron acceptor for the enzyme is believed to be ubiquinone. The protein is NADH-ubiquinone oxidoreductase chain 1 (mt:ND1) of Drosophila persimilis (Fruit fly).